Reading from the N-terminus, the 158-residue chain is MKALYPGSFDPLTFGHLDLIQRGSDLFGEVLIAVLENPSKKATFSCERRIEQIKNATKDIPGCRTIAFKGLTVDCAHENNADLILRGLRAMSDFEYELQVAHTNRSLNNQYETIFLATETHHSFLSSSVVKEVARFGGEIRHMVPEFIAKDLMKLNTN.

Substrate is bound at residue Ser-8. ATP contacts are provided by residues 8–9 (SF) and His-16. Residues Lys-40, Thr-72, and Arg-86 each contribute to the substrate site. ATP contacts are provided by residues 87–89 (GLR), Glu-97, and 122–128 (HSFLSSS).

This sequence belongs to the bacterial CoaD family. In terms of assembly, homohexamer. The cofactor is Mg(2+).

The protein resides in the cytoplasm. It carries out the reaction (R)-4'-phosphopantetheine + ATP + H(+) = 3'-dephospho-CoA + diphosphate. Its pathway is cofactor biosynthesis; coenzyme A biosynthesis; CoA from (R)-pantothenate: step 4/5. Reversibly transfers an adenylyl group from ATP to 4'-phosphopantetheine, yielding dephospho-CoA (dPCoA) and pyrophosphate. This is Phosphopantetheine adenylyltransferase from Prochlorococcus marinus (strain NATL2A).